We begin with the raw amino-acid sequence, 444 residues long: Homogentisate 1,2-dioxygenase (444 aa).

Histidine 298 serves as the catalytic Proton acceptor. Residues histidine 341 and glutamate 347 each coordinate Fe cation. The homogentisate site is built by tyrosine 356 and histidine 377. Histidine 377 serves as a coordination point for Fe cation.

The protein belongs to the homogentisate dioxygenase family. As to quaternary structure, hexamer; dimer of trimers. The cofactor is Fe cation.

It carries out the reaction homogentisate + O2 = 4-maleylacetoacetate + H(+). It functions in the pathway amino-acid degradation; L-phenylalanine degradation; acetoacetate and fumarate from L-phenylalanine: step 4/6. In terms of biological role, involved in the catabolism of homogentisate (2,5-dihydroxyphenylacetate or 2,5-OH-PhAc), a central intermediate in the degradation of phenylalanine and tyrosine. Catalyzes the oxidative ring cleavage of the aromatic ring of homogentisate to yield maleylacetoacetate. In Burkholderia cenocepacia (strain ATCC BAA-245 / DSM 16553 / LMG 16656 / NCTC 13227 / J2315 / CF5610) (Burkholderia cepacia (strain J2315)), this protein is Homogentisate 1,2-dioxygenase.